The chain runs to 206 residues: Heat shock protein beta-1 (206 aa).

The residue at position 12 (arginine 12) is an Omega-N-methylarginine. Serine 13 is modified (phosphoserine). Serine 15 bears the Phosphoserine; by MAPKAPK2 and MAPKAPK3 mark. The residue at position 27 (serine 27) is a Phosphoserine. Residues 74 to 206 are interaction with TGFB1I1; the sequence is RPAFSRALNR…GPESEQSGAK (133 aa). The sHSP domain maps to 80-188; the sequence is ALNRQLSSGV…QSAEITIPVT (109 aa). At serine 86 the chain carries Phosphoserine; by MAPKAPK2, MAPKAPK3 and MAPKAPK5. Phosphoserine is present on residues serine 87, serine 90, and serine 102. Lysine 127 is subject to N6-acetyllysine. Threonine 178 is modified (phosphothreonine). 2 positions are modified to phosphoserine: serine 180 and serine 200.

Belongs to the small heat shock protein (HSP20) family. Homooligomer. Homodimer; becomes monomeric upon activation. Heterooligomer; with HSPB6. Associates with alpha- and beta-tubulin. Interacts with TGFB1I1. Interacts with CRYAB. Interacts with HSPB8. Interacts with HSPBAP1. Phosphorylated upon exposure to protein kinase C activators and heat shock. Phosphorylation by MAPKAPK2 and MAPKAPK3 in response to stress dissociates HSPB1 from large small heat-shock protein (sHsps) oligomers and impairs its chaperone activity and ability to protect against oxidative stress effectively. Phosphorylation by MAPKAPK5 in response to PKA stimulation induces F-actin rearrangement. Expressed in a variety of tissues. High levels in lung, adrenal, xiphoid, adipose tissue, heart and striated and smooth muscle, lower levels in the CNS. Adult levels are much higher in the slow-twitch soleus muscle than in the fast-twitch rectus femoris and extensor digitorum muscles.

Its subcellular location is the cytoplasm. The protein localises to the nucleus. The protein resides in the cytoskeleton. It localises to the spindle. In terms of biological role, small heat shock protein which functions as a molecular chaperone probably maintaining denatured proteins in a folding-competent state. Plays a role in stress resistance and actin organization. Through its molecular chaperone activity may regulate numerous biological processes including the phosphorylation and the axonal transport of neurofilament proteins. The protein is Heat shock protein beta-1 (Hspb1) of Rattus norvegicus (Rat).